The primary structure comprises 943 residues: Valine--tRNA ligase (943 aa).

The 'HIGH' region motif lies at 45–55 (PNVTGTLHMGH). Positions 541 to 545 (KMSKS) match the 'KMSKS' region motif. Lys544 lines the ATP pocket. Positions 875–934 (IDVAAERIRLAKEIEKLEKQISIAQGKLANEGFVARAPAAVIDQEKQRVADFTATLEQLK) form a coiled coil.

The protein belongs to the class-I aminoacyl-tRNA synthetase family. ValS type 1 subfamily. Monomer.

It localises to the cytoplasm. The enzyme catalyses tRNA(Val) + L-valine + ATP = L-valyl-tRNA(Val) + AMP + diphosphate. Its function is as follows. Catalyzes the attachment of valine to tRNA(Val). As ValRS can inadvertently accommodate and process structurally similar amino acids such as threonine, to avoid such errors, it has a 'posttransfer' editing activity that hydrolyzes mischarged Thr-tRNA(Val) in a tRNA-dependent manner. This chain is Valine--tRNA ligase, found in Dechloromonas aromatica (strain RCB).